The primary structure comprises 318 residues: 2-desacetyl-2-hydroxyethyl bacteriochlorophyllide A dehydrogenase (318 aa).

It participates in porphyrin-containing compound metabolism; bacteriochlorophyll biosynthesis (light-independent). Its function is as follows. This protein catalyzes the penultimate step in bacteriochlorophyll a biosynthesis. This is 2-desacetyl-2-hydroxyethyl bacteriochlorophyllide A dehydrogenase (bchC) from Cereibacter sphaeroides (strain ATCC 17023 / DSM 158 / JCM 6121 / CCUG 31486 / LMG 2827 / NBRC 12203 / NCIMB 8253 / ATH 2.4.1.) (Rhodobacter sphaeroides).